The sequence spans 309 residues: MKTRSKLAAGFLTLMSVATLAACSGKTSNGTNVVTMKGDTITVSDFYDQVKTSKAAQQSMLTLILSRVFDTQYGDKVSDKKVSEAYNKTAKGYGNSFSSALSQAGLTPEGYKQQIRTTMLVEYAVKEAAKKELTEANYKEAYKNYTPETSVQVIKLDAEDKAKSVLKDVKADGADFAKIAKEKTTATDKKVEYKFDSAGTTLPKEVMSAAFKLDKNGVSDVVSTVDSTTYKTSYYIIKVTDKTEKKSDWKSYKNRLKEVILKDKTSDRAFQNKVISKALEKANVKIKDKAFAGILSQYATTSGSSSLKK.

The signal sequence occupies residues 1-22 (MKTRSKLAAGFLTLMSVATLAA). Cysteine 23 carries N-palmitoyl cysteine lipidation. Residue cysteine 23 is the site of S-diacylglycerol cysteine attachment. The region spanning 146-241 (TPETSVQVIK…TSYYIIKVTD (96 aa)) is the PpiC domain.

The protein belongs to the PrsA family.

Its subcellular location is the cell membrane. It carries out the reaction [protein]-peptidylproline (omega=180) = [protein]-peptidylproline (omega=0). Functionally, plays a major role in protein secretion by helping the post-translocational extracellular folding of several secreted proteins. The sequence is that of Foldase protein PrsA from Streptococcus agalactiae serotype V (strain ATCC BAA-611 / 2603 V/R).